The chain runs to 571 residues: Putative fatty-acid--CoA ligase fadD11 (571 aa).

Low complexity predominate over residues 1-19 (MARLRGAGAAGRCRPGRFG). 2 disordered regions span residues 1–35 (MARL…EPDR) and 67–91 (RQRG…RCAH). Over residues 78–91 (ATVRRSRSRQRCAH) the composition is skewed to basic residues. Helical transmembrane passes span 314 to 334 (TLAF…MSEL) and 431 to 451 (ANIE…MAIG).

The protein belongs to the ATP-dependent AMP-binding enzyme family.

It is found in the cell membrane. The chain is Putative fatty-acid--CoA ligase fadD11 (fadD11) from Mycobacterium tuberculosis (strain CDC 1551 / Oshkosh).